The primary structure comprises 506 residues: Trans-cinnamate 4-monooxygenase (506 aa).

The helical transmembrane segment at 3–23 threads the bilayer; the sequence is DFVLLEKALLGLFIATIVAIT. (E)-cinnamate contacts are provided by residues 214–219 and A307; that span reads RSRLAQ. A heme-binding site is contributed by C448.

The protein belongs to the cytochrome P450 family. Heme is required as a cofactor.

It localises to the membrane. The enzyme catalyses (E)-cinnamate + reduced [NADPH--hemoprotein reductase] + O2 = (E)-4-coumarate + oxidized [NADPH--hemoprotein reductase] + H2O + H(+). It participates in phenylpropanoid metabolism; trans-4-coumarate biosynthesis; trans-4-coumarate from trans-cinnamate: step 1/1. Catalyzes the first oxidative step of the phenylpropanoid pathway in higher plants by transforming trans-cinnamate into p-coumarate. The compounds formed by this pathway are essential components for lignification, pollination, and defense against ultraviolet light, predators and pathogens. The sequence is that of Trans-cinnamate 4-monooxygenase (CYP73A10) from Petroselinum crispum (Parsley).